We begin with the raw amino-acid sequence, 473 residues long: Chromosomal replication initiator protein DnaA (473 aa).

Residues 1–73 are domain I, interacts with DnaA modulators; it reads MTNIEQDRWS…LSCWQAEMPQ (73 aa). The segment at 73-129 is domain II; the sequence is QVHRVDLTVRTAMRCAAPAKDAPAHAEPRRDDGRPAPELRATAIAPVSATHEALGGS. The segment at 130–352 is domain III, AAA+ region; it reads PLDPRLTFGS…GAINRLLAHS (223 aa). ATP-binding residues include Gly-177, Gly-179, Lys-180, and Thr-181. The tract at residues 353–473 is domain IV, binds dsDNA; it reads KLNAQPVTLE…VELLKRQLQE (121 aa).

This sequence belongs to the DnaA family. Oligomerizes as a right-handed, spiral filament on DNA at oriC.

The protein resides in the cytoplasm. Functionally, plays an essential role in the initiation and regulation of chromosomal replication. ATP-DnaA binds to the origin of replication (oriC) to initiate formation of the DNA replication initiation complex once per cell cycle. Binds the DnaA box (a 9 base pair repeat at the origin) and separates the double-stranded (ds)DNA. Forms a right-handed helical filament on oriC DNA; dsDNA binds to the exterior of the filament while single-stranded (ss)DNA is stabiized in the filament's interior. The ATP-DnaA-oriC complex binds and stabilizes one strand of the AT-rich DNA unwinding element (DUE), permitting loading of DNA polymerase. After initiation quickly degrades to an ADP-DnaA complex that is not apt for DNA replication. Binds acidic phospholipids. This Rhodopseudomonas palustris (strain BisB18) protein is Chromosomal replication initiator protein DnaA.